We begin with the raw amino-acid sequence, 150 residues long: Arginine repressor (150 aa).

The protein belongs to the ArgR family.

It is found in the cytoplasm. The protein operates within amino-acid biosynthesis; L-arginine biosynthesis [regulation]. Regulates arginine biosynthesis genes. This is Arginine repressor from Clostridium botulinum (strain Eklund 17B / Type B).